Consider the following 188-residue polypeptide: mRNA transport factor GFD1 (188 aa).

The segment at 1–128 (MPLESIWADA…KTQSKQDTAS (128 aa)) is disordered. Residues 18–28 (KQKPSHKRSNN) are compositionally biased toward basic residues. Residues 29 to 44 (NKKNNNSRWSNESSSN) are compositionally biased toward low complexity. A compositionally biased stretch (basic and acidic residues) spans 59-79 (GNHESKTKNKIKETLPREKKP). Phosphoserine occurs at positions 87, 106, and 111. Residues 112-128 (PSKMKTTKTQSKQDTAS) show a composition bias toward low complexity. A coiled-coil region spans residues 119-164 (KTQSKQDTASKMKLLKKKIEEQREILQKTHHKNQQQQVLMDFLNDE).

Interacts with GLE1, NUP42, NAB2, ZDS1 and probably DBP5. Forms a complex with GLE1 and NAB2.

It is found in the cytoplasm. Its subcellular location is the nucleus. The protein resides in the nuclear pore complex. The protein localises to the nucleus membrane. Its function is as follows. High-copy suppressor of mutant alleles of ATP-dependent RNA helicase DBP5, which is involved in mRNA export from the nucleus. It may also play an important role in a late stage of NAB2-mRNA export. The protein is mRNA transport factor GFD1 (GFD1) of Saccharomyces cerevisiae (strain ATCC 204508 / S288c) (Baker's yeast).